A 443-amino-acid polypeptide reads, in one-letter code: Probable glutamate dehydrogenase (443 aa).

The active site involves Lys-86.

The protein belongs to the Glu/Leu/Phe/Val dehydrogenases family.

The catalysed reaction is L-glutamate + NAD(+) + H2O = 2-oxoglutarate + NH4(+) + NADH + H(+). It catalyses the reaction L-glutamate + NADP(+) + H2O = 2-oxoglutarate + NH4(+) + NADPH + H(+). The polypeptide is Probable glutamate dehydrogenase (Sinorhizobium fredii (strain NBRC 101917 / NGR234)).